The following is a 373-amino-acid chain: Glutamine synthetase (373 aa).

Ala2 is subject to N-acetylalanine. Residues 2-25 (ATSASSHLNKGIKQVYMSLPQGEK) form a required for glutamine-induced ubiquitination by CRL4(CRBN) and proteasomal degradation region. Lys11 and Lys14 each carry N6-acetyllysine. Residues 24–106 (EKVQAMYIWI…VFCEVFKYNR (83 aa)) enclose the GS beta-grasp domain. Tyr104 is modified (phosphotyrosine). In terms of domain architecture, GS catalytic spans 113–373 (LRHTCKRIMD…TGDEPFQYKN (261 aa)). Glu134 contributes to the ATP binding site. Residues Glu134, Glu136, Glu196, and Glu203 each coordinate Mn(2+). 203-208 (EFQIGP) provides a ligand contact to ATP. 246 to 247 (NW) is an L-glutamate binding site. His253 lines the Mn(2+) pocket. Residues 255 to 257 (NFS), Arg319, and Arg324 contribute to the ATP site. Position 319 (Arg319) interacts with L-glutamate. Position 336–338 (336–338 (YFE)) interacts with ADP. Glu338 contacts Mn(2+). Residue Arg340 participates in L-glutamate binding. Phosphoserine is present on Ser343.

It belongs to the glutamine synthetase family. In terms of assembly, decamer; composed of two pentamers. Interacts with PALMD. Interacts with RHOJ. Interacts with BEST2; this interaction tethers a fraction of GLUL to the membrane, causing a decrease of cytosolic glutamine synthase (GS) activity and inhibits the chloride channel activity of BEST2 by affecting the gating at the aperture in the absence of intracellular glutamate. It depends on Mg(2+) as a cofactor. Mn(2+) serves as cofactor. Post-translationally, palmitoylated; undergoes autopalmitoylation. Acetylated by EP300/p300; acetylation is stimulated by increased glutamine levels and promotes ubiquitin-mediated proteasomal degradation. In terms of processing, ubiquitinated by ZNRF1. Ubiquitinated by the DCX (DDB1-CUL4-X-box) E3 ubiquitin-protein ligase complex called CRL4(CRBN), leading to proteasomal degradation.

The protein resides in the cytoplasm. The protein localises to the cytosol. It localises to the microsome. Its subcellular location is the mitochondrion. It is found in the cell membrane. It carries out the reaction L-glutamate + NH4(+) + ATP = L-glutamine + ADP + phosphate + H(+). The enzyme catalyses L-cysteinyl-[protein] + hexadecanoyl-CoA = S-hexadecanoyl-L-cysteinyl-[protein] + CoA. With respect to regulation, glutamine synthetase activity is inhibited by methionine sulfoximine (MSO). In terms of biological role, glutamine synthetase that catalyzes the ATP-dependent conversion of glutamate and ammonia to glutamine. Its role depends on tissue localization: in the brain, it regulates the levels of toxic ammonia and converts neurotoxic glutamate to harmless glutamine, whereas in the liver, it is one of the enzymes responsible for the removal of ammonia. Plays a key role in ammonium detoxification during erythropoiesis: the glutamine synthetase activity is required to remove ammonium generated by porphobilinogen deaminase (HMBS) during heme biosynthesis to prevent ammonium accumulation and oxidative stress. Essential for proliferation of fetal skin fibroblasts. Independently of its glutamine synthetase activity, required for endothelial cell migration during vascular development. Involved in angiogenesis by regulating membrane localization and activation of the GTPase RHOJ, possibly by promoting RHOJ palmitoylation. May act as a palmitoyltransferase for RHOJ: able to autopalmitoylate and then transfer the palmitoyl group to RHOJ. Plays a role in ribosomal 40S subunit biogenesis. Through the interaction with BEST2, inhibits BEST2 channel activity by affecting the gating at the aperture in the absence of intracellular L-glutamate, but sensitizes BEST2 to intracellular L-glutamate, which promotes the opening of BEST2 and thus relieves its inhibitory effect on BEST2. The chain is Glutamine synthetase from Sus scrofa (Pig).